Consider the following 165-residue polypeptide: Chorismate pyruvate-lyase (165 aa).

The substrate site is built by M35, R77, L115, and E156.

Belongs to the UbiC family. In terms of assembly, monomer.

It is found in the cytoplasm. The enzyme catalyses chorismate = 4-hydroxybenzoate + pyruvate. It functions in the pathway cofactor biosynthesis; ubiquinone biosynthesis. Removes the pyruvyl group from chorismate, with concomitant aromatization of the ring, to provide 4-hydroxybenzoate (4HB) for the ubiquinone pathway. This chain is Chorismate pyruvate-lyase, found in Escherichia coli O127:H6 (strain E2348/69 / EPEC).